Here is a 396-residue protein sequence, read N- to C-terminus: Tyrosine--tRNA ligase (396 aa).

The short motif at 39–48 is the 'HIGH' region element; sequence PTAPDLHLGH. Positions 223–227 match the 'KMSKS' region motif; sequence KMSKS. Lys-226 serves as a coordination point for ATP. An S4 RNA-binding domain is found at 334-395; it reads LPVPQLLKQA…GKRKFARVTV (62 aa).

This sequence belongs to the class-I aminoacyl-tRNA synthetase family. TyrS type 2 subfamily. In terms of assembly, homodimer.

The protein resides in the cytoplasm. The catalysed reaction is tRNA(Tyr) + L-tyrosine + ATP = L-tyrosyl-tRNA(Tyr) + AMP + diphosphate + H(+). Its function is as follows. Catalyzes the attachment of tyrosine to tRNA(Tyr) in a two-step reaction: tyrosine is first activated by ATP to form Tyr-AMP and then transferred to the acceptor end of tRNA(Tyr). The chain is Tyrosine--tRNA ligase from Thiobacillus denitrificans (strain ATCC 25259 / T1).